Consider the following 162-residue polypeptide: Deoxyuridine 5'-triphosphate nucleotidohydrolase (162 aa).

It belongs to the dUTPase family. In terms of assembly, homotrimer. Mg(2+) serves as cofactor.

The protein resides in the host cytoplasm. It is found in the virion. It catalyses the reaction dUTP + H2O = dUMP + diphosphate + H(+). In terms of biological role, the viral dUTPase may play a role in lowering the dUTP concentration in natural infections to minimize misincorporation of deoxyuridine into the viral DNA and ensure the fidelity of genome replication. The polypeptide is Deoxyuridine 5'-triphosphate nucleotidohydrolase (Ornithodoros (relapsing fever ticks)).